We begin with the raw amino-acid sequence, 365 residues long: Caffeic acid 3-O-methyltransferase (365 aa).

130-136 (MNQDKVL) provides a ligand contact to substrate. Residues 162-180 (AFDYHGTDPRFNKVFNKGM) are substrate binding. S-adenosyl-L-methionine contacts are provided by G208, D231, D251, M252, and K265. H269 functions as the Proton acceptor in the catalytic mechanism.

This sequence belongs to the class I-like SAM-binding methyltransferase superfamily. Cation-independent O-methyltransferase family. COMT subfamily. Homodimer.

The catalysed reaction is (E)-caffeate + S-adenosyl-L-methionine = (E)-ferulate + S-adenosyl-L-homocysteine + H(+). It participates in aromatic compound metabolism; phenylpropanoid biosynthesis. In terms of biological role, catalyzes the conversion of caffeic acid to ferulic acid and of 5-hydroxyferulic acid to sinapic acid. The resulting products may subsequently be converted to the corresponding alcohols that are incorporated into lignins. In Rosa chinensis (China rose), this protein is Caffeic acid 3-O-methyltransferase (COMT1).